A 262-amino-acid chain; its full sequence is Putative glycyl-radical enzyme activating enzyme HI_0520 (262 aa).

Positions 20–262 (VEGQGNRSSI…CGINKILTIL (243 aa)) constitute a Radical SAM core domain. [4Fe-4S] cluster contacts are provided by C34, C38, and C41. S-adenosyl-L-methionine contacts are provided by residues 40 to 42 (YCH), G81, and 130 to 132 (DLK).

The protein belongs to the organic radical-activating enzymes family. It depends on [4Fe-4S] cluster as a cofactor.

The catalysed reaction is glycyl-[protein] + reduced [flavodoxin] + S-adenosyl-L-methionine = glycin-2-yl radical-[protein] + semiquinone [flavodoxin] + 5'-deoxyadenosine + L-methionine + H(+). This is Putative glycyl-radical enzyme activating enzyme HI_0520 from Haemophilus influenzae (strain ATCC 51907 / DSM 11121 / KW20 / Rd).